The sequence spans 1270 residues: Vigilin (1270 aa).

Residues 1–11 (MSSVAVLTQES) show a composition bias toward polar residues. 2 disordered regions span residues 1 to 23 (MSSVAVLTQESFAEHRSGLTQQQ) and 28 to 47 (ALNSEEENDPPTYKEAFPPL). 11 consecutive KH domains span residues 150–188 (ASATVAIPKEHHRFVIGKNGEKLQDLELKTATKIQIPRP), 219–260 (DKRA…IPPP), 291–333 (KKKT…IPPT), 360–402 (ANSF…EFTE), 431–473 (INRT…IPPD), 504–545 (ENER…NFPD), 577–619 (VENS…LPGR), 651–693 (ANIT…FPTE), 724–766 (QTKS…FPTS), 798–840 (DNVV…LPTV), and 872–913 (EAQV…FPDR). A disordered region spans residues 911–947 (PDREENPAPVAEPALQENGEEGGEGKDGKDADPSSPR). A compositionally biased stretch (basic and acidic residues) spans 933–947 (GEGKDGKDADPSSPR). KH domains lie at 970–1012 (ALVP…VPAP), 1051–1093 (ALRS…FPDK), and 1126–1168 (LEQM…FPQS). Residues 1217–1270 (SHEESKVPSKGFVVRDAPCGTVNNEKAPDMSSSEDFPSFGAQVAPKTLPWGPKR) form a disordered region.

The protein localises to the cytoplasm. This is Vigilin (HDLBP) from Gallus gallus (Chicken).